We begin with the raw amino-acid sequence, 123 residues long: Histone H2B (123 aa).

Residues 1–32 (MAPKAPGKGAKKAAKSKAPRAPGDRKRKRTRR) form a disordered region. A compositionally biased stretch (basic residues) spans 9-18 (GAKKAAKSKA). An O-linked (GlcNAc) serine glycan is attached at S110. A Glycyl lysine isopeptide (Lys-Gly) (interchain with G-Cter in ubiquitin) cross-link involves residue K118.

Belongs to the histone H2B family. In terms of assembly, the nucleosome is a histone octamer containing two molecules each of H2A, H2B, H3 and H4 assembled in one H3-H4 heterotetramer and two H2A-H2B heterodimers. The octamer wraps approximately 147 bp of DNA. In terms of processing, monoubiquitination of Lys-118 gives a specific tag for epigenetic transcriptional activation and is also prerequisite for histone H3 'Lys-4' and 'Lys-79' methylation. GlcNAcylation at Ser-110 promotes monoubiquitination of Lys-118. It fluctuates in response to extracellular glucose, and associates with transcribed genes.

It localises to the nucleus. The protein resides in the chromosome. In terms of biological role, core component of nucleosome. Nucleosomes wrap and compact DNA into chromatin, limiting DNA accessibility to the cellular machineries which require DNA as a template. Histones thereby play a central role in transcription regulation, DNA repair, DNA replication and chromosomal stability. DNA accessibility is regulated via a complex set of post-translational modifications of histones, also called histone code, and nucleosome remodeling. The chain is Histone H2B from Holothuria tubulosa (Tubular sea cucumber).